Consider the following 568-residue polypeptide: Pentatricopeptide repeat-containing protein At1g73400, mitochondrial (568 aa).

Residues 1–55 constitute a mitochondrion transit peptide; it reads MMRRLVSYFVRSRFSLHLSTTPPQRSALFSHILSSHLDSIQINKKISSFSVHRFC. PPR repeat units follow at residues 233 to 263, 267 to 301, 302 to 336, 340 to 374, 375 to 409, 410 to 444, 445 to 479, and 480 to 514; these read EINA…MRHR, DANT…GHKP, ENFT…GSAV, TAKT…GCLP, DVST…GYPP, DIVT…RCAP, SVQT…DCVQ, and DVET…GLKL.

This sequence belongs to the PPR family. P subfamily.

It is found in the mitochondrion. This Arabidopsis thaliana (Mouse-ear cress) protein is Pentatricopeptide repeat-containing protein At1g73400, mitochondrial.